A 91-amino-acid polypeptide reads, in one-letter code: Probable insulin-like peptide gamma-type 1 (91 aa).

The N-terminal stretch at 1–26 (MSSYRQTLFILIILIVIILFVNEGQG) is a signal peptide. Intrachain disulfides connect Cys-37/Cys-66, Cys-49/Cys-79, and Cys-65/Cys-70.

Belongs to the insulin family.

Its subcellular location is the secreted. The sequence is that of Probable insulin-like peptide gamma-type 1 (ins-11) from Caenorhabditis elegans.